We begin with the raw amino-acid sequence, 675 residues long: UvrABC system protein B (675 aa).

The Helicase ATP-binding domain maps to Ser30–Arg417. Gly43–Thr50 lines the ATP pocket. Positions Tyr96–Ile119 match the Beta-hairpin motif. A Helicase C-terminal domain is found at Gln434–Asp601. Positions Ala637–Gln672 constitute a UVR domain.

Belongs to the UvrB family. In terms of assembly, forms a heterotetramer with UvrA during the search for lesions. Interacts with UvrC in an incision complex.

The protein localises to the cytoplasm. The UvrABC repair system catalyzes the recognition and processing of DNA lesions. A damage recognition complex composed of 2 UvrA and 2 UvrB subunits scans DNA for abnormalities. Upon binding of the UvrA(2)B(2) complex to a putative damaged site, the DNA wraps around one UvrB monomer. DNA wrap is dependent on ATP binding by UvrB and probably causes local melting of the DNA helix, facilitating insertion of UvrB beta-hairpin between the DNA strands. Then UvrB probes one DNA strand for the presence of a lesion. If a lesion is found the UvrA subunits dissociate and the UvrB-DNA preincision complex is formed. This complex is subsequently bound by UvrC and the second UvrB is released. If no lesion is found, the DNA wraps around the other UvrB subunit that will check the other stand for damage. This Acinetobacter baylyi (strain ATCC 33305 / BD413 / ADP1) protein is UvrABC system protein B.